The chain runs to 517 residues: Crotonobetaine/carnitine--CoA ligase (517 aa).

The protein belongs to the ATP-dependent AMP-binding enzyme family.

It carries out the reaction 4-(trimethylamino)butanoate + ATP + CoA = 4-(trimethylamino)butanoyl-CoA + AMP + diphosphate. The catalysed reaction is crotonobetaine + ATP + CoA = crotonobetainyl-CoA + AMP + diphosphate. It catalyses the reaction (R)-carnitine + ATP + CoA = (R)-carnitinyl-CoA + AMP + diphosphate. The protein operates within amine and polyamine metabolism; carnitine metabolism. Catalyzes the transfer of CoA to carnitine, generating the initial carnitinyl-CoA needed for the CaiB reaction cycle. Also has activity toward crotonobetaine and gamma-butyrobetaine. The protein is Crotonobetaine/carnitine--CoA ligase of Salmonella paratyphi C (strain RKS4594).